The primary structure comprises 86 residues: CLAVATA3/ESR (CLE)-related protein 8 (86 aa).

The N-terminal stretch at 1-24 is a signal peptide; that stretch reads MKVLKRDSMLLLITLYFLLTTSMA. The segment at 43–86 is disordered; that stretch reads DLKQNKAKPHLPNLFRTMRRVPTGPNPLHHISPPQPGSLNYARN. A hydroxyproline mark is found at Pro64 and Pro67. O-linked (Ara...) hydroxyproline glycosylation is present at Pro67.

Belongs to the CLV3/ESR signal peptide family. In terms of processing, the O-glycosylation (arabinosylation) of the hydroxyproline Pro-67 enhances binding affinity of the CLE8p peptide for its receptor. As to expression, mostly expressed in siliques, and, to a lower extent, in flowers. Expressed in young embryos and endosperm.

It is found in the secreted. The protein localises to the extracellular space. Extracellular signal peptide that regulates cell fate. Represses root apical meristem maintenance. Positively regulates the expression of the transcription factor WOX8 and thus, regulates early embryo development. Regulates the transition of protophloem cells from proliferation to differentiation, thus impinging on postembryonic growth capacity of the root meristem; this signaling pathway requires CRN and CLV2. This chain is CLAVATA3/ESR (CLE)-related protein 8, found in Arabidopsis thaliana (Mouse-ear cress).